The following is a 132-amino-acid chain: Small ribosomal subunit protein uS9 (132 aa).

Residues 100–132 (LKSNGLLTRDDRTKERKKPGLKRARKAPQYTKR) are disordered. Basic residues predominate over residues 114-132 (ERKKPGLKRARKAPQYTKR).

Belongs to the universal ribosomal protein uS9 family.

The polypeptide is Small ribosomal subunit protein uS9 (Dehalococcoides mccartyi (strain ATCC BAA-2266 / KCTC 15142 / 195) (Dehalococcoides ethenogenes (strain 195))).